The following is a 119-amino-acid chain: Putative membrane protein insertion efficiency factor (119 aa).

It belongs to the UPF0161 family.

It localises to the cell inner membrane. In terms of biological role, could be involved in insertion of integral membrane proteins into the membrane. This chain is Putative membrane protein insertion efficiency factor, found in Agrobacterium fabrum (strain C58 / ATCC 33970) (Agrobacterium tumefaciens (strain C58)).